A 250-amino-acid chain; its full sequence is 2,5-dichloro-2,5-cyclohexadiene-1,4-diol dehydrogenase LinX (250 aa).

Positions 38, 64, 65, 156, 160, 191, and 194 each coordinate NAD(+). The active-site Proton acceptor is the tyrosine 156.

The protein belongs to the short-chain dehydrogenases/reductases (SDR) family.

It catalyses the reaction 2,5-dichlorocyclohexa-2,5-dien-1,4-diol + NAD(+) = 2,5-dichlorohydroquinone + NADH + H(+). Its function is as follows. Catalyzes the degradation of 2,5-dichloro-2,5-cyclohexadiene-1,4-diol (2,5-DDOL) into 2,5-dichlorohydroquinone (2,5-DCHQ) in vitro. LinX appears not to be involved in gamma-hexachlorocyclohexane (gamma-HCH) degradation pathway, in contrast to LinC which has the same enzymatic activity. The sequence is that of 2,5-dichloro-2,5-cyclohexadiene-1,4-diol dehydrogenase LinX from Sphingobium indicum (strain DSM 16412 / CCM 7286 / MTCC 6364 / B90A).